The following is a 644-amino-acid chain: Chaperone protein DnaK (644 aa).

Residue threonine 199 is modified to Phosphothreonine; by autocatalysis. The disordered stretch occupies residues 589–644 (QALAEASHKLAEKMYSQGQGPQAGPGEEPSGQSGGTEKPVEGEVVDAEFEEVKNKK). Positions 604 to 619 (SQGQGPQAGPGEEPSG) are enriched in low complexity.

The protein belongs to the heat shock protein 70 family.

Acts as a chaperone. The sequence is that of Chaperone protein DnaK from Nitrosospira multiformis (strain ATCC 25196 / NCIMB 11849 / C 71).